A 357-amino-acid chain; its full sequence is Peptide chain release factor 1 (357 aa).

An N5-methylglutamine modification is found at Gln-234.

It belongs to the prokaryotic/mitochondrial release factor family. Post-translationally, methylated by PrmC. Methylation increases the termination efficiency of RF1.

It localises to the cytoplasm. Functionally, peptide chain release factor 1 directs the termination of translation in response to the peptide chain termination codons UAG and UAA. The protein is Peptide chain release factor 1 of Arthrobacter sp. (strain FB24).